Consider the following 514-residue polypeptide: MQQLNPSEISEIIKGRIEKLDVSSQARNEGTVVSVSDGIVRIHGLADVMYGEMIEFPGSVFGMALNLEQDSVGAVVLGDYTSLAEGMSAKCTGRILEVPVGKELLGRVVDALGNPIDGKGPLNNTETDAVEKVAPGVIWRKSVDQPVQTGYKSVDAMIPVGRGQRELIIGDRQIGKTAMAVDAIINQKNSGIFCVYVAVGQKQSTIANVVRKLEEAGALANTIVVAASASESAALQFLAPYAGCTMGEFFRDRGEDALIVYDDLSKQAVAYRQISLLLRRPPGREAYPGDVFYLHSRLLERASRVSEEYVEKFTNGAVTGKTGSLTALPIIETQAGDVSAFVPTNVISITDGQIFLESAMFNAGIRPAVNAGVSVSRVGGAAQTKIIKKLSGGIRTALAQYRELAAFAQFASDLDEATRKQLEHGQRVTELMKQKQYAPMSIADMALSLYAAERGFLTDVEVAKVGSFEQALIAYFNRDHAELMAKINVKGDFNDEIDAGMKAGIEKFKATQTW.

An ATP-binding site is contributed by 170–177; that stretch reads GDRQIGKT.

This sequence belongs to the ATPase alpha/beta chains family. F-type ATPases have 2 components, CF(1) - the catalytic core - and CF(0) - the membrane proton channel. CF(1) has five subunits: alpha(3), beta(3), gamma(1), delta(1), epsilon(1). CF(0) has three main subunits: a(1), b(2) and c(9-12). The alpha and beta chains form an alternating ring which encloses part of the gamma chain. CF(1) is attached to CF(0) by a central stalk formed by the gamma and epsilon chains, while a peripheral stalk is formed by the delta and b chains.

It localises to the cell inner membrane. It carries out the reaction ATP + H2O + 4 H(+)(in) = ADP + phosphate + 5 H(+)(out). Produces ATP from ADP in the presence of a proton gradient across the membrane. The alpha chain is a regulatory subunit. This Pseudomonas entomophila (strain L48) protein is ATP synthase subunit alpha.